Reading from the N-terminus, the 294-residue chain is tRNA dimethylallyltransferase (294 aa).

10-17 is a binding site for ATP; sequence GPTAVGKT. 12–17 is a binding site for substrate; that stretch reads TAVGKT. Residues 35–38 form an interaction with substrate tRNA region; the sequence is DSQQ.

It belongs to the IPP transferase family. As to quaternary structure, monomer. Mg(2+) serves as cofactor.

The enzyme catalyses adenosine(37) in tRNA + dimethylallyl diphosphate = N(6)-dimethylallyladenosine(37) in tRNA + diphosphate. Functionally, catalyzes the transfer of a dimethylallyl group onto the adenine at position 37 in tRNAs that read codons beginning with uridine, leading to the formation of N6-(dimethylallyl)adenosine (i(6)A). This chain is tRNA dimethylallyltransferase, found in Streptococcus gordonii (strain Challis / ATCC 35105 / BCRC 15272 / CH1 / DL1 / V288).